The following is a 159-amino-acid chain: Superoxide dismutase [Cu-Zn] (159 aa).

Cu cation-binding residues include His47, His49, and His64. Residues Cys58 and Cys150 are joined by a disulfide bond. Zn(2+) is bound by residues His64, His72, His81, and Asp84. Position 121 (His121) interacts with Cu cation.

This sequence belongs to the Cu-Zn superoxide dismutase family. Cu cation is required as a cofactor. Requires Zn(2+) as cofactor.

Its subcellular location is the cytoplasm. It carries out the reaction 2 superoxide + 2 H(+) = H2O2 + O2. In terms of biological role, destroys radicals which are normally produced within the cells and which are toxic to biological systems. The protein is Superoxide dismutase [Cu-Zn] (SOD) of Haemonchus contortus (Barber pole worm).